Reading from the N-terminus, the 486-residue chain is Ammonium transporter 2 member 1 (486 aa).

11 helical membrane-spanning segments follow: residues 29–49 (ASTL…GSIV), 57–77 (SAFM…LVGF), 127–147 (LVLF…GSVL), 161–181 (LWLL…GFLY), 190–210 (GGYV…YWVG), 225–245 (ILLM…FNGG), 252–272 (IAAS…LLMW), 285–305 (VIGA…GAGL), 309–329 (WAAV…MMIL), 343–363 (LAVF…TGLL), and 399–419 (FVIA…GLFI). Positions 454-470 (RHDLSRGGGGGDRDGPA) are enriched in basic and acidic residues. Positions 454–473 (RHDLSRGGGGGDRDGPAGER) are disordered.

It belongs to the ammonia transporter channel (TC 1.A.11.2) family. In terms of tissue distribution, expressed in roots and leaf blades and sheaths.

It is found in the cell membrane. Its function is as follows. Involved in ammonium transport. This Oryza sativa subsp. japonica (Rice) protein is Ammonium transporter 2 member 1 (AMT2-1).